The primary structure comprises 292 residues: UDP-3-O-acyl-N-acetylglucosamine deacetylase (292 aa).

Zn(2+) contacts are provided by His-76, His-232, and Asp-236. The active-site Proton donor is His-259.

It belongs to the LpxC family. Zn(2+) serves as cofactor.

The catalysed reaction is a UDP-3-O-[(3R)-3-hydroxyacyl]-N-acetyl-alpha-D-glucosamine + H2O = a UDP-3-O-[(3R)-3-hydroxyacyl]-alpha-D-glucosamine + acetate. The protein operates within glycolipid biosynthesis; lipid IV(A) biosynthesis; lipid IV(A) from (3R)-3-hydroxytetradecanoyl-[acyl-carrier-protein] and UDP-N-acetyl-alpha-D-glucosamine: step 2/6. In terms of biological role, catalyzes the hydrolysis of UDP-3-O-myristoyl-N-acetylglucosamine to form UDP-3-O-myristoylglucosamine and acetate, the committed step in lipid A biosynthesis. In Thermodesulfovibrio yellowstonii (strain ATCC 51303 / DSM 11347 / YP87), this protein is UDP-3-O-acyl-N-acetylglucosamine deacetylase.